A 407-amino-acid polypeptide reads, in one-letter code: MSHRKFSAPRHGHLGFLPHKRSHRHRGKVKTWPRDDPSQPVHLTAFLGYKAGMTHTLREVHRPGLKISKREEVEAVTIVETPPLVVVGVVGYVATPRGLRSFKTIFAEHLSDECRRRFYKDWHKSKKKAFTKACKRWRDADGKKQLQKDFAAMKKYCKVIRVIVHTQMKLLPFRQKKAHIMEVQLNGGTVAEKVAWAQARLEKQVPVHSVFSQNEIIDVIAVTKGRGIKGVTSRWHTKKLPRKTHKGLRKVACIGAWHPARVGCSIARAGQKGYHHRTELNKKIYRIGRGLHMEDGKVVKNNASTSYDVTDKSITPLGGFPHYGEVNNDFVMLKGCIAGTKKRVITLRKSLLVHHSRQALENIELKFIDTTSKFGHGRFQTAQEKRAFMGPQKKHLEKEKPETSGDL.

The span at 1–31 (MSHRKFSAPRHGHLGFLPHKRSHRHRGKVKT) shows a compositional bias: basic residues. 2 disordered regions span residues 1 to 35 (MSHR…WPRD) and 383 to 407 (QEKR…SGDL). Residues 394–407 (KHLEKEKPETSGDL) are compositionally biased toward basic and acidic residues.

The protein belongs to the universal ribosomal protein uL3 family. Component of the large ribosomal subunit in striated muscle cells.

Its function is as follows. Heart- and skeletal muscle-specific component of the ribosome, which regulates muscle function. Component of the large ribosomal subunit in striated muscle cells: replaces the RPL3 paralog in the ribosome in these cells. The ribosome is a large ribonucleoprotein complex responsible for the synthesis of proteins in the cell. Inhibits myotube growth and muscle function. The protein is Large ribosomal subunit protein uL3-like (RPL3L) of Bos taurus (Bovine).